A 242-amino-acid chain; its full sequence is Demethylmenaquinone methyltransferase (242 aa).

S-adenosyl-L-methionine is bound by residues T62, D83, and 112–113 (DV).

Belongs to the class I-like SAM-binding methyltransferase superfamily. MenG/UbiE family.

It catalyses the reaction a 2-demethylmenaquinol + S-adenosyl-L-methionine = a menaquinol + S-adenosyl-L-homocysteine + H(+). Its pathway is quinol/quinone metabolism; menaquinone biosynthesis; menaquinol from 1,4-dihydroxy-2-naphthoate: step 2/2. In terms of biological role, methyltransferase required for the conversion of demethylmenaquinol (DMKH2) to menaquinol (MKH2). This chain is Demethylmenaquinone methyltransferase, found in Protochlamydia amoebophila (strain UWE25).